Consider the following 1145-residue polypeptide: Cation channel sperm-associated auxiliary subunit gamma 2 (1145 aa).

An N-terminal signal peptide occupies residues 1–38 (MVSRPAMSPVSPVWPRKPNLWAFWVLRLVLLLSLKSWA). At 39–1061 (EDALQHCTWL…IHGLPLSSKR (1023 aa)) the chain is on the extracellular side. Disulfide bonds link Cys-45–Cys-106 and Cys-160–Cys-166. Asn-103 carries N-linked (GlcNAc...) asparagine glycosylation. Asn-178 carries an N-linked (GlcNAc...) asparagine glycan. A disulfide bridge links Cys-289 with Cys-344. 4 N-linked (GlcNAc...) asparagine glycosylation sites follow: Asn-356, Asn-402, Asn-672, and Asn-743. 6 disulfides stabilise this stretch: Cys-395–Cys-403, Cys-634–Cys-856, Cys-802–Cys-830, Cys-878–Cys-1042, Cys-905–Cys-914, and Cys-1006–Cys-1012. A glycan (N-linked (GlcNAc...) asparagine) is linked at Asn-1038. The helical transmembrane segment at 1062–1083 (TSFIVMVSTSFFIALVVFYILF) threads the bilayer. The Cytoplasmic segment spans residues 1084–1145 (CLVWPHIVKA…KEDNVQAKTA (62 aa)).

It belongs to the CATSPERG family. In terms of assembly, component of the CatSper complex or CatSpermasome composed of the core pore-forming members CATSPER1, CATSPER2, CATSPER3 and CATSPER4 as well as auxiliary members CATSPERB, CATSPERG2, CATSPERD, CATSPERE, CATSPERZ, C2CD6/CATSPERT, SLCO6C1, TMEM249, TMEM262 and EFCAB9. HSPA1 may be an additional auxiliary complex member. The core complex members CATSPER1, CATSPER2, CATSPER3 and CATSPER4 form a heterotetrameric channel. The auxiliary CATSPERB, CATSPERG2, CATSPERD and CATSPERE subunits form a pavilion-like structure over the pore which stabilizes the complex through interactions with CATSPER4, CATSPER3, CATSPER1 and CATSPER2 respectively. SLCO6C1 interacts with CATSPERE and TMEM262/CATSPERH interacts with CATSPERB, further stabilizing the complex. C2CD6/CATSPERT interacts at least with CATSPERD and is required for targeting the CatSper complex in the flagellar membrane. As to expression, testis-specific. Specifically expressed in the principal piece of the sperm tail (at protein level). Expressed in spermatocytes and spermatids within the seminiferous tubule but not in interstitial cells.

The protein resides in the cell projection. The protein localises to the cilium. It is found in the flagellum membrane. Its function is as follows. Auxiliary component of the CatSper complex, a complex involved in sperm cell hyperactivation. Sperm cell hyperactivation is needed for sperm motility which is essential late in the preparation of sperm for fertilization. In Mus musculus (Mouse), this protein is Cation channel sperm-associated auxiliary subunit gamma 2.